The following is a 517-amino-acid chain: 2-isopropylmalate synthase (517 aa).

One can recognise a Pyruvate carboxyltransferase domain in the interval isoleucine 4–lysine 266. 4 residues coordinate Mn(2+): aspartate 13, histidine 201, histidine 203, and asparagine 237. The regulatory domain stretch occupies residues glutamate 391–serine 517.

This sequence belongs to the alpha-IPM synthase/homocitrate synthase family. LeuA type 1 subfamily. As to quaternary structure, homodimer. The cofactor is Mn(2+).

The protein localises to the cytoplasm. It catalyses the reaction 3-methyl-2-oxobutanoate + acetyl-CoA + H2O = (2S)-2-isopropylmalate + CoA + H(+). The protein operates within amino-acid biosynthesis; L-leucine biosynthesis; L-leucine from 3-methyl-2-oxobutanoate: step 1/4. In terms of biological role, catalyzes the condensation of the acetyl group of acetyl-CoA with 3-methyl-2-oxobutanoate (2-ketoisovalerate) to form 3-carboxy-3-hydroxy-4-methylpentanoate (2-isopropylmalate). The chain is 2-isopropylmalate synthase from Bacillus pumilus (strain SAFR-032).